Consider the following 246-residue polypeptide: Carboxy-S-adenosyl-L-methionine synthase (246 aa).

Residues Tyr-39, 64-66 (GCS), 89-90 (DN), 121-122 (DI), Asn-136, and Arg-203 contribute to the S-adenosyl-L-methionine site.

This sequence belongs to the class I-like SAM-binding methyltransferase superfamily. Cx-SAM synthase family. Homodimer.

It carries out the reaction prephenate + S-adenosyl-L-methionine = carboxy-S-adenosyl-L-methionine + 3-phenylpyruvate + H2O. In terms of biological role, catalyzes the conversion of S-adenosyl-L-methionine (SAM) to carboxy-S-adenosyl-L-methionine (Cx-SAM). The sequence is that of Carboxy-S-adenosyl-L-methionine synthase from Pseudomonas aeruginosa (strain UCBPP-PA14).